The chain runs to 960 residues: Ran GTPase-activating protein 2 (960 aa).

LRR repeat units lie at residues His69–Glu92, Gly132–Phe156, Leu162–Ala185, Leu227–Met254, and Arg313–Ser340. Positions Asn370–Thr408 are disordered. Residues Glu380–Ala401 are compositionally biased toward acidic residues. LRR repeat units lie at residues Ala475 to Lys498, Gly538 to Asp561, Ser568 to Cys595, and Asn663 to Ala685. Positions Pro777–Asp819 are disordered. Composition is skewed to acidic residues over residues Gly783 to Glu798 and Ser806 to Asp819.

The protein localises to the nucleus. In terms of biological role, GTPase system comprising ran-1, ran-2 and ran-3 is essential in nucleocytoplasmic trafficking. Ran-2 is a GTPase activator for the nuclear RAS-related regulatory protein Ran, converting it to the putatively inactive GDP-bound state. Required for correct chromosome alignment and segregation on the metaphase plate. This Caenorhabditis elegans protein is Ran GTPase-activating protein 2 (ran-2).